Reading from the N-terminus, the 607-residue chain is UvrABC system protein C (607 aa).

A GIY-YIG domain is found at 16 to 94 (GRPGVYRMFD…IKEWRPPYNI (79 aa)). Residues 203 to 238 (NALTDELSGAMEQAASTLDFERAAELRDQISLLRRV) form the UVR domain.

It belongs to the UvrC family. Interacts with UvrB in an incision complex.

Its subcellular location is the cytoplasm. Functionally, the UvrABC repair system catalyzes the recognition and processing of DNA lesions. UvrC both incises the 5' and 3' sides of the lesion. The N-terminal half is responsible for the 3' incision and the C-terminal half is responsible for the 5' incision. This Pseudomonas fluorescens (strain SBW25) protein is UvrABC system protein C.